A 606-amino-acid chain; its full sequence is MNIFPSLMLTSLFTLTLPIIASTLNIHKNSNTPHHMKNIISFAFIISLIPTMMFIYSGQEMIISNWHWMTTQTLKLSLSFKLDYFSMIFVPVALFVTWSIMEFSIWYMHSDPHITQFFKYLLMFLITMMILVTANNLFQLFIGWEGVGIMSFLLIGWWYGRTDANTAALQAILYNRIGDIGFIMSMAWFLSNMNSWDLQQIFTLDPNHTNLPLMGLLLAATGKSAQFGLHPWLPSAMEGPTPVSALLHSSTMVVAGVFLLIRFHPLMENNKTAQTLTLCLGAITTLFTAICALTQNDIKKIIAFSTSSQLGLMIVTIGINQPHLAFLHICTHAFFKAMLFMCSGSIIHNLNNEQDIRKMGGLFKTMPFTATSLIIGSFALTGMPFLTGFYSKDLIIETANTSYTNAWALLMTLIATSLTAAYSTRMIFFTLLGQPRFPTLITINENNPHLTNSIKRLLIGSIFAGFFISNNIYPTTTPKMTMPSYLKLMALIVTILGFALALELSLATYNLKFKHPSNPLKFSSLLGYFPTIFHRLPPSMGLLASQKSASLLLDSMWLENILPKSISLFQMKSSTLVSNQKGLIKLYFLSFLITLTLSLLLLTPHG.

The next 16 membrane-spanning stretches (helical) occupy residues 1–21, 38–58, 87–107, 114–134, 140–160, 171–191, 213–233, 241–261, 273–293, 301–320, 325–347, 366–386, 409–429, 457–477, 488–508, and 582–602; these read MNIFPSLMLTSLFTLTLPIIA, NIISFAFIISLIPTMMFIYSG, MIFVPVALFVTWSIMEFSIWY, ITQFFKYLLMFLITMMILVTA, LFIGWEGVGIMSFLLIGWWYG, AILYNRIGDIGFIMSMAWFLS, LMGLLLAATGKSAQFGLHPWL, TPVSALLHSSTMVVAGVFLLI, AQTLTLCLGAITTLFTAICAL, IIAFSTSSQLGLMIVTIGIN, AFLHICTHAFFKAMLFMCSGSII, MPFTATSLIIGSFALTGMPFL, LLMTLIATSLTAAYSTRMIFF, LLIGSIFAGFFISNNIYPTTT, LMALIVTILGFALALELSLAT, and GLIKLYFLSFLITLTLSLLLL.

Belongs to the complex I subunit 5 family. In terms of assembly, core subunit of respiratory chain NADH dehydrogenase (Complex I) which is composed of 45 different subunits.

It localises to the mitochondrion inner membrane. The enzyme catalyses a ubiquinone + NADH + 5 H(+)(in) = a ubiquinol + NAD(+) + 4 H(+)(out). Core subunit of the mitochondrial membrane respiratory chain NADH dehydrogenase (Complex I) which catalyzes electron transfer from NADH through the respiratory chain, using ubiquinone as an electron acceptor. Essential for the catalytic activity and assembly of complex I. The polypeptide is NADH-ubiquinone oxidoreductase chain 5 (MT-ND5) (Rhinoceros unicornis (Greater Indian rhinoceros)).